The sequence spans 343 residues: tRNA N6-adenosine threonylcarbamoyltransferase (343 aa).

The Fe cation site is built by histidine 112 and histidine 116. Residues 135 to 139 (LVSGG), aspartate 168, glycine 181, and asparagine 273 each bind substrate. Aspartate 301 provides a ligand contact to Fe cation.

Belongs to the KAE1 / TsaD family. Fe(2+) is required as a cofactor.

It is found in the cytoplasm. It carries out the reaction L-threonylcarbamoyladenylate + adenosine(37) in tRNA = N(6)-L-threonylcarbamoyladenosine(37) in tRNA + AMP + H(+). Functionally, required for the formation of a threonylcarbamoyl group on adenosine at position 37 (t(6)A37) in tRNAs that read codons beginning with adenine. Is involved in the transfer of the threonylcarbamoyl moiety of threonylcarbamoyl-AMP (TC-AMP) to the N6 group of A37, together with TsaE and TsaB. TsaD likely plays a direct catalytic role in this reaction. This chain is tRNA N6-adenosine threonylcarbamoyltransferase, found in Azoarcus sp. (strain BH72).